Consider the following 172-residue polypeptide: Protein GrpE (172 aa).

Belongs to the GrpE family. As to quaternary structure, homodimer.

Its subcellular location is the cytoplasm. Functionally, participates actively in the response to hyperosmotic and heat shock by preventing the aggregation of stress-denatured proteins, in association with DnaK and GrpE. It is the nucleotide exchange factor for DnaK and may function as a thermosensor. Unfolded proteins bind initially to DnaJ; upon interaction with the DnaJ-bound protein, DnaK hydrolyzes its bound ATP, resulting in the formation of a stable complex. GrpE releases ADP from DnaK; ATP binding to DnaK triggers the release of the substrate protein, thus completing the reaction cycle. Several rounds of ATP-dependent interactions between DnaJ, DnaK and GrpE are required for fully efficient folding. The chain is Protein GrpE from Thermotoga petrophila (strain ATCC BAA-488 / DSM 13995 / JCM 10881 / RKU-1).